A 213-amino-acid polypeptide reads, in one-letter code: Thymidylate kinase (213 aa).

ATP is bound at residue 10–17; it reads GLEGAGKT.

It belongs to the thymidylate kinase family.

The enzyme catalyses dTMP + ATP = dTDP + ADP. Phosphorylation of dTMP to form dTDP in both de novo and salvage pathways of dTTP synthesis. In Escherichia coli O1:K1 / APEC, this protein is Thymidylate kinase.